The primary structure comprises 296 residues: 4-hydroxybenzoate octaprenyltransferase (296 aa).

8 helical membrane passes run 28–48, 51–71, 102–122, 143–163, 174–194, 212–232, 233–253, and 274–294; these read IGTL…SDGI, LAVL…GCVI, LLLT…LNHL, FFPI…PMAF, AWIL…VYAM, FGRY…LLMA, VLGA…IVLL, and FLAN…HTFF.

It belongs to the UbiA prenyltransferase family. It depends on Mg(2+) as a cofactor.

It is found in the cell inner membrane. The enzyme catalyses all-trans-octaprenyl diphosphate + 4-hydroxybenzoate = 4-hydroxy-3-(all-trans-octaprenyl)benzoate + diphosphate. The protein operates within cofactor biosynthesis; ubiquinone biosynthesis. In terms of biological role, catalyzes the prenylation of para-hydroxybenzoate (PHB) with an all-trans polyprenyl group. Mediates the second step in the final reaction sequence of ubiquinone-8 (UQ-8) biosynthesis, which is the condensation of the polyisoprenoid side chain with PHB, generating the first membrane-bound Q intermediate 3-octaprenyl-4-hydroxybenzoate. The sequence is that of 4-hydroxybenzoate octaprenyltransferase from Neisseria meningitidis serogroup C (strain 053442).